We begin with the raw amino-acid sequence, 148 residues long: Nucleoside diphosphate kinase (148 aa).

ATP-binding residues include Lys9, Phe57, Arg85, Thr91, Arg102, and Asn112. Position 91 is a phosphothreonine (Thr91). His115 serves as the catalytic Pros-phosphohistidine intermediate. Ser122 is subject to Phosphoserine.

It belongs to the NDK family. In terms of assembly, homotetramer. Mg(2+) is required as a cofactor.

The protein localises to the cytoplasm. It carries out the reaction a 2'-deoxyribonucleoside 5'-diphosphate + ATP = a 2'-deoxyribonucleoside 5'-triphosphate + ADP. It catalyses the reaction a ribonucleoside 5'-diphosphate + ATP = a ribonucleoside 5'-triphosphate + ADP. Major role in the synthesis of nucleoside triphosphates other than ATP. The ATP gamma phosphate is transferred to the NDP beta phosphate via a ping-pong mechanism, using a phosphorylated active-site intermediate. This chain is Nucleoside diphosphate kinase, found in Bacillus cereus (strain ATCC 10987 / NRS 248).